A 330-amino-acid chain; its full sequence is Ketol-acid reductoisomerase (NADP(+)) (330 aa).

Residues 1-181 form the KARI N-terminal Rossmann domain; that stretch reads MNVYYEQDAD…GGAKAGVIET (181 aa). Residues 24 to 27, R47, S50, S52, and 82 to 85 contribute to the NADP(+) site; these read YGSQ and DQYQ. The active site involves H107. Residue G133 participates in NADP(+) binding. The 146-residue stretch at 182-327 folds into the KARI C-terminal knotted domain; the sequence is TIKDETETDL…AKLRNMMSWL (146 aa). 4 residues coordinate Mg(2+): D190, E194, E226, and E230. Residue S251 participates in substrate binding.

Belongs to the ketol-acid reductoisomerase family. The cofactor is Mg(2+).

It carries out the reaction (2R)-2,3-dihydroxy-3-methylbutanoate + NADP(+) = (2S)-2-acetolactate + NADPH + H(+). The enzyme catalyses (2R,3R)-2,3-dihydroxy-3-methylpentanoate + NADP(+) = (S)-2-ethyl-2-hydroxy-3-oxobutanoate + NADPH + H(+). Its pathway is amino-acid biosynthesis; L-isoleucine biosynthesis; L-isoleucine from 2-oxobutanoate: step 2/4. It participates in amino-acid biosynthesis; L-valine biosynthesis; L-valine from pyruvate: step 2/4. Functionally, involved in the biosynthesis of branched-chain amino acids (BCAA). Catalyzes an alkyl-migration followed by a ketol-acid reduction of (S)-2-acetolactate (S2AL) to yield (R)-2,3-dihydroxy-isovalerate. In the isomerase reaction, S2AL is rearranged via a Mg-dependent methyl migration to produce 3-hydroxy-3-methyl-2-ketobutyrate (HMKB). In the reductase reaction, this 2-ketoacid undergoes a metal-dependent reduction by NADPH to yield (R)-2,3-dihydroxy-isovalerate. This chain is Ketol-acid reductoisomerase (NADP(+)), found in Prosthecochloris aestuarii (strain DSM 271 / SK 413).